A 393-amino-acid chain; its full sequence is Putative odorant receptor 69a, isoform B (393 aa).

The Cytoplasmic segment spans residues Met-1–Arg-39. Residues Ile-40–Gly-60 traverse the membrane as a helical segment. Residues Tyr-61–Asp-69 are Extracellular-facing. Residues Pro-70–Gly-90 form a helical membrane-spanning segment. The Cytoplasmic portion of the chain corresponds to Thr-91–Asn-138. The chain crosses the membrane as a helical span at residues Thr-139–Ile-159. The Extracellular portion of the chain corresponds to Arg-160 to Asn-208. A helical membrane pass occupies residues Met-209 to Leu-229. The Cytoplasmic portion of the chain corresponds to Ala-230–Asn-269. The helical transmembrane segment at Phe-270–Met-290 threads the bilayer. The Extracellular segment spans residues Thr-291–Leu-305. Residues Leu-306–Ser-326 traverse the membrane as a helical segment. Residues Gly-327–Tyr-365 lie on the Cytoplasmic side of the membrane. The helical transmembrane segment at Lys-366–Phe-386 threads the bilayer. The Extracellular segment spans residues Thr-387–Lys-393.

This sequence belongs to the insect chemoreceptor superfamily. Heteromeric odorant receptor channel (TC 1.A.69) family. Or49a subfamily. As to quaternary structure, interacts with Orco. Complexes exist early in the endomembrane system in olfactory sensory neurons (OSNs), coupling these complexes to the conserved ciliary trafficking pathway. Expressed in olfactory sensory neurons in the antenna.

It is found in the cell membrane. Functionally, odorant receptor which mediates acceptance or avoidance behavior, depending on its substrates. The odorant receptor repertoire encodes a large collection of odor stimuli that vary widely in identity, intensity, and duration. May form a complex with Orco to form odorant-sensing units, providing sensitive and prolonged odorant signaling and calcium permeability. This chain is Putative odorant receptor 69a, isoform B (Or69a), found in Drosophila melanogaster (Fruit fly).